A 515-amino-acid chain; its full sequence is Ribose import ATP-binding protein RbsA 1 (515 aa).

2 consecutive ABC transporter domains span residues 8–244 (FQME…IGRE) and 256–503 (VPAT…LNIH). Residue 40–47 (GENGAGKS) participates in ATP binding.

Belongs to the ABC transporter superfamily. Ribose importer (TC 3.A.1.2.1) family. The complex is composed of an ATP-binding protein (RbsA), two transmembrane proteins (RbsC) and a solute-binding protein (RbsB).

The protein localises to the cell inner membrane. It catalyses the reaction D-ribose(out) + ATP + H2O = D-ribose(in) + ADP + phosphate + H(+). Functionally, part of the ABC transporter complex RbsABC involved in ribose import. Responsible for energy coupling to the transport system. This Mesorhizobium japonicum (strain LMG 29417 / CECT 9101 / MAFF 303099) (Mesorhizobium loti (strain MAFF 303099)) protein is Ribose import ATP-binding protein RbsA 1.